The primary structure comprises 188 residues: Large ribosomal subunit protein eL18 (188 aa).

Residue Lys-119 forms a Glycyl lysine isopeptide (Lys-Gly) (interchain with G-Cter in SUMO2) linkage. Ser-130 carries the phosphoserine modification. Residues 150–188 form a disordered region; that stretch reads RHFGKAPGTPHSHTKPYVRSKGRKFERARGRRASRGYKN. Thr-158 is modified (phosphothreonine). Composition is skewed to basic residues over residues 161 to 171 and 178 to 188; these read SHTKPYVRSKG and RGRRASRGYKN. Lys-164 is covalently cross-linked (Glycyl lysine isopeptide (Lys-Gly) (interchain with G-Cter in SUMO2)).

It belongs to the eukaryotic ribosomal protein eL18 family. Component of the large ribosomal subunit.

It is found in the cytoplasm. The protein localises to the cytosol. Its subcellular location is the rough endoplasmic reticulum. Its function is as follows. Component of the large ribosomal subunit. The ribosome is a large ribonucleoprotein complex responsible for the synthesis of proteins in the cell. The polypeptide is Large ribosomal subunit protein eL18 (RPL18) (Bos taurus (Bovine)).